The primary structure comprises 577 residues: Arginine--tRNA ligase (577 aa).

The 'HIGH' region motif lies at 122–132; the sequence is PNVAKEMHVGH.

The protein belongs to the class-I aminoacyl-tRNA synthetase family. Monomer.

It localises to the cytoplasm. It catalyses the reaction tRNA(Arg) + L-arginine + ATP = L-arginyl-tRNA(Arg) + AMP + diphosphate. This chain is Arginine--tRNA ligase, found in Vibrio parahaemolyticus serotype O3:K6 (strain RIMD 2210633).